Reading from the N-terminus, the 155-residue chain is Endoribonuclease YbeY (155 aa).

The Zn(2+) site is built by His120, His124, and His130.

Belongs to the endoribonuclease YbeY family. Zn(2+) serves as cofactor.

The protein resides in the cytoplasm. Its function is as follows. Single strand-specific metallo-endoribonuclease involved in late-stage 70S ribosome quality control and in maturation of the 3' terminus of the 16S rRNA. The chain is Endoribonuclease YbeY from Alkaliphilus metalliredigens (strain QYMF).